We begin with the raw amino-acid sequence, 271 residues long: Undecaprenyl-diphosphatase (271 aa).

Transmembrane regions (helical) follow at residues 5-25, 43-63, 80-100, 109-129, 145-165, 186-206, 215-235, and 246-266; these read LLIK…LPIS, FATM…VYYF, GFNL…IGIL, LFSP…MIVI, VSTS…FPGM, AEFS…FELV, LEWE…LIVV, and VLKP…FLIA.

This sequence belongs to the UppP family.

Its subcellular location is the cell membrane. It catalyses the reaction di-trans,octa-cis-undecaprenyl diphosphate + H2O = di-trans,octa-cis-undecaprenyl phosphate + phosphate + H(+). Functionally, catalyzes the dephosphorylation of undecaprenyl diphosphate (UPP). Confers resistance to bacitracin. This Caldanaerobacter subterraneus subsp. tengcongensis (strain DSM 15242 / JCM 11007 / NBRC 100824 / MB4) (Thermoanaerobacter tengcongensis) protein is Undecaprenyl-diphosphatase.